Here is an 824-residue protein sequence, read N- to C-terminus: Translation initiation factor IF-2 (824 aa).

The tract at residues M1 to D234 is disordered. Composition is skewed to basic and acidic residues over residues G59–L75 and K82–A144. The segment covering P145–A159 has biased composition (low complexity). Residues A170–G186 show a composition bias toward basic and acidic residues. The tr-type G domain occupies P321–K491. The segment at G330–T337 is G1. G330 to T337 contributes to the GTP binding site. The interval G355 to H359 is G2. Positions D377–G380 are G3. GTP contacts are provided by residues D377–H381 and N431–D434. The G4 stretch occupies residues N431 to D434. A G5 region spans residues S467 to M469.

This sequence belongs to the TRAFAC class translation factor GTPase superfamily. Classic translation factor GTPase family. IF-2 subfamily.

It is found in the cytoplasm. Functionally, one of the essential components for the initiation of protein synthesis. Protects formylmethionyl-tRNA from spontaneous hydrolysis and promotes its binding to the 30S ribosomal subunits. Also involved in the hydrolysis of GTP during the formation of the 70S ribosomal complex. The chain is Translation initiation factor IF-2 from Jannaschia sp. (strain CCS1).